The following is a 241-amino-acid chain: Adenosine 5'-phosphosulfate reductase (241 aa).

Residues cysteine 122, cysteine 123, cysteine 205, and cysteine 208 each coordinate [4Fe-4S] cluster. Cysteine 231 functions as the Nucleophile; cysteine thiosulfonate intermediate in the catalytic mechanism.

Belongs to the PAPS reductase family. CysH subfamily. The cofactor is [4Fe-4S] cluster.

It localises to the cytoplasm. It catalyses the reaction [thioredoxin]-disulfide + sulfite + AMP + 2 H(+) = adenosine 5'-phosphosulfate + [thioredoxin]-dithiol. Its pathway is sulfur metabolism; hydrogen sulfide biosynthesis; sulfite from sulfate. Functionally, catalyzes the formation of sulfite from adenosine 5'-phosphosulfate (APS) using thioredoxin as an electron donor. This is Adenosine 5'-phosphosulfate reductase from Shouchella clausii (strain KSM-K16) (Alkalihalobacillus clausii).